Consider the following 139-residue polypeptide: D-ribose pyranase (139 aa).

The active-site Proton donor is H20. Residues D28, H106, and 128–130 (YAN) contribute to the substrate site.

Belongs to the RbsD / FucU family. RbsD subfamily. Homodecamer.

The protein localises to the cytoplasm. It carries out the reaction beta-D-ribopyranose = beta-D-ribofuranose. It functions in the pathway carbohydrate metabolism; D-ribose degradation; D-ribose 5-phosphate from beta-D-ribopyranose: step 1/2. Its function is as follows. Catalyzes the interconversion of beta-pyran and beta-furan forms of D-ribose. The sequence is that of D-ribose pyranase from Salmonella agona (strain SL483).